A 212-amino-acid chain; its full sequence is Pyridoxine/pyridoxamine 5'-phosphate oxidase (212 aa).

Substrate-binding positions include 7–10 and K65; that span reads RRQY. FMN contacts are provided by residues 60 to 65, 75 to 76, R81, K82, and Q104; these read RIVLLK and FT. Positions 122, 126, and 130 each coordinate substrate. FMN-binding positions include 139–140 and W184; that span reads QS. 190–192 serves as a coordination point for substrate; that stretch reads RLH. R194 serves as a coordination point for FMN.

It belongs to the pyridoxamine 5'-phosphate oxidase family. In terms of assembly, homodimer. It depends on FMN as a cofactor.

It catalyses the reaction pyridoxamine 5'-phosphate + O2 + H2O = pyridoxal 5'-phosphate + H2O2 + NH4(+). The enzyme catalyses pyridoxine 5'-phosphate + O2 = pyridoxal 5'-phosphate + H2O2. Its pathway is cofactor metabolism; pyridoxal 5'-phosphate salvage; pyridoxal 5'-phosphate from pyridoxamine 5'-phosphate: step 1/1. It functions in the pathway cofactor metabolism; pyridoxal 5'-phosphate salvage; pyridoxal 5'-phosphate from pyridoxine 5'-phosphate: step 1/1. Catalyzes the oxidation of either pyridoxine 5'-phosphate (PNP) or pyridoxamine 5'-phosphate (PMP) into pyridoxal 5'-phosphate (PLP). In Alteromonas mediterranea (strain DSM 17117 / CIP 110805 / LMG 28347 / Deep ecotype), this protein is Pyridoxine/pyridoxamine 5'-phosphate oxidase.